The sequence spans 213 residues: Adenylate kinase (213 aa).

An ATP-binding site is contributed by 14–19 (GSGKGT). Positions 34–63 (SSGNLLRSAIKASTPLGIKASEYIDEGQLV) are NMP. Residues Ser35, Arg40, 61–63 (QLV), 89–92 (GFPR), and Gln96 contribute to the AMP site. The LID stretch occupies residues 129–162 (SRFICPSCNFVYNQSQGFRECPTCHSELVRRSDD). Arg130 lines the ATP pocket. The Zn(2+) site is built by Cys133 and Cys136. An ATP-binding site is contributed by 139-140 (VY). Zn(2+)-binding residues include Cys149 and Cys152. Positions 159 and 170 each coordinate AMP. Lys198 contacts ATP.

Belongs to the adenylate kinase family. As to quaternary structure, monomer.

Its subcellular location is the cytoplasm. The catalysed reaction is AMP + ATP = 2 ADP. Its pathway is purine metabolism; AMP biosynthesis via salvage pathway; AMP from ADP: step 1/1. In terms of biological role, catalyzes the reversible transfer of the terminal phosphate group between ATP and AMP. Plays an important role in cellular energy homeostasis and in adenine nucleotide metabolism. This chain is Adenylate kinase, found in Chlamydia felis (strain Fe/C-56) (Chlamydophila felis).